The following is a 1071-amino-acid chain: ATP-dependent helicase/deoxyribonuclease subunit B (1071 aa).

The protein belongs to the helicase family. AddB/RexB type 2 subfamily. In terms of assembly, heterodimer of AddA and RexB. Mg(2+) is required as a cofactor.

Its function is as follows. The heterodimer acts as both an ATP-dependent DNA helicase and an ATP-dependent, dual-direction single-stranded exonuclease. Recognizes the chi site generating a DNA molecule suitable for the initiation of homologous recombination. This subunit has 5' -&gt; 3' nuclease activity but not helicase activity. This is ATP-dependent helicase/deoxyribonuclease subunit B from Streptococcus pyogenes serotype M1.